Consider the following 470-residue polypeptide: Meiosis-specific with OB domain-containing protein (470 aa).

Positions 167–272 (IINVLAAVRS…EANILLNFIR (106 aa)) form a DNA-binding region, OB.

It belongs to the MEIOB family. As to quaternary structure, component of a multiprotein complex with RPA2 and SPATA22. Interacts with SPATA22. Interacts with the complex BRME1:HSF2BP:BRCA2.

The protein localises to the cytoplasm. It localises to the nucleus. The protein resides in the chromosome. Functionally, single-stranded DNA-binding protein required for homologous recombination in meiosis I. Required for double strand breaks (DSBs) repair and crossover formation and promotion of faithful and complete synapsis. Not required for the initial loading of recombinases but required to maintain a proper number of RAD51 and DMC1 foci after the zygotene stage. May act by ensuring the stabilization of recombinases, which is required for successful homology search and meiotic recombination. Displays Single-stranded DNA 3'-5' exonuclease activity in vitro. This Rattus norvegicus (Rat) protein is Meiosis-specific with OB domain-containing protein.